We begin with the raw amino-acid sequence, 335 residues long: Putative serine/threonine-protein kinase 040L (335 aa).

The 297-residue stretch at Tyr33–Leu329 folds into the Protein kinase domain. Residues His39–Ile47 and Lys62 each bind ATP. The Proton acceptor role is filled by Asp196.

Belongs to the protein kinase superfamily. Ser/Thr protein kinase family.

In Invertebrate iridescent virus 3 (IIV-3), this protein is Putative serine/threonine-protein kinase 040L.